The sequence spans 185 residues: Ribosome-recycling factor (185 aa).

Belongs to the RRF family.

The protein resides in the cytoplasm. Functionally, responsible for the release of ribosomes from messenger RNA at the termination of protein biosynthesis. May increase the efficiency of translation by recycling ribosomes from one round of translation to another. The sequence is that of Ribosome-recycling factor from Edwardsiella ictaluri (strain 93-146).